A 172-amino-acid polypeptide reads, in one-letter code: Myosin regulatory light chain (172 aa).

Thr-17 carries the post-translational modification Phosphothreonine. Ser-18 carries the phosphoserine modification. EF-hand domains are found at residues 27-62 (AQIQ…LGKE), 98-133 (DPEE…MGER), and 134-168 (YSEE…GTKD). The Ca(2+) site is built by Asp-40, Asn-42, Asp-44, and Asp-51.

In terms of assembly, myosin is a hexamer of 2 heavy chains and 4 light chains (two regulatory light chains and two essential light chains). May be phosphorylated by let-502 or/and pak-1 and dephosphorylated by mel-11 to regulate its activation and myosin II-mediated contraction. As to expression, expressed in the spermathecal and uterine walls. Weak expression in gonadal sheath and intestinal muscle. Not detected in vulval, pharyngeal or body wall muscles.

It localises to the cytoplasm. The protein localises to the cytoskeleton. Regulates myosin II activity and organization during embryo elongation. May be involved in the organization of mlc-5 into bundles. Required maternally for cytokinesis during meiosis and mitosis in the early embryo and for the establishment of embryonic anterior-posterior polarity. This chain is Myosin regulatory light chain, found in Caenorhabditis elegans.